Here is a 356-residue protein sequence, read N- to C-terminus: Glucose 1-dehydrogenase 2 (356 aa).

Asp-38 is a binding site for Zn(2+). Ser-40 contacts substrate. Zn(2+) contacts are provided by His-64 and Glu-65. Substrate contacts are provided by Glu-114 and Glu-150. Glu-150 is a Zn(2+) binding site. NADP(+)-binding positions include 181–184 (NGNL), 206–207 (RR), and 301–303 (VVN). Asn-303 serves as a coordination point for substrate.

Belongs to the zinc-containing alcohol dehydrogenase family. Glucose 1-dehydrogenase subfamily. It depends on Zn(2+) as a cofactor.

The enzyme catalyses D-glucose + NAD(+) = D-glucono-1,5-lactone + NADH + H(+). It carries out the reaction D-glucose + NADP(+) = D-glucono-1,5-lactone + NADPH + H(+). In terms of biological role, catalyzes the NAD(P)(+)-dependent oxidation of D-glucose to D-gluconate via gluconolactone. Can utilize both NAD(+) and NADP(+) as electron acceptor. Is involved in the degradation of glucose through a modified Entner-Doudoroff pathway. This Haloterrigena turkmenica (strain ATCC 51198 / DSM 5511 / JCM 9101 / NCIMB 13204 / VKM B-1734 / 4k) (Halococcus turkmenicus) protein is Glucose 1-dehydrogenase 2.